A 105-amino-acid chain; its full sequence is Large ribosomal subunit protein eL36 (105 aa).

A disordered region spans residues M1 to K20.

Belongs to the eukaryotic ribosomal protein eL36 family.

The chain is Large ribosomal subunit protein eL36 (rpl36) from Trichoderma hamatum.